The primary structure comprises 258 residues: 4-hydroxy-tetrahydrodipicolinate reductase (258 aa).

NAD(+) contacts are provided by residues 8–13, 86–88, and 110–113; these read GGSGKM, GTT, and ATNM. H142 serves as the catalytic Proton donor/acceptor. H143 is a (S)-2,3,4,5-tetrahydrodipicolinate binding site. The Proton donor role is filled by K146. (S)-2,3,4,5-tetrahydrodipicolinate is bound at residue 152-153; that stretch reads GT.

This sequence belongs to the DapB family.

Its subcellular location is the cytoplasm. The enzyme catalyses (S)-2,3,4,5-tetrahydrodipicolinate + NAD(+) + H2O = (2S,4S)-4-hydroxy-2,3,4,5-tetrahydrodipicolinate + NADH + H(+). It carries out the reaction (S)-2,3,4,5-tetrahydrodipicolinate + NADP(+) + H2O = (2S,4S)-4-hydroxy-2,3,4,5-tetrahydrodipicolinate + NADPH + H(+). Its pathway is amino-acid biosynthesis; L-lysine biosynthesis via DAP pathway; (S)-tetrahydrodipicolinate from L-aspartate: step 4/4. Its function is as follows. Catalyzes the conversion of 4-hydroxy-tetrahydrodipicolinate (HTPA) to tetrahydrodipicolinate. The polypeptide is 4-hydroxy-tetrahydrodipicolinate reductase (Campylobacter hominis (strain ATCC BAA-381 / DSM 21671 / CCUG 45161 / LMG 19568 / NCTC 13146 / CH001A)).